Consider the following 199-residue polypeptide: MEEEMLIPEEEYQKSGVHIGTQVKSSDMKPYIFKIRNDGLYILDVKKTNSKLIAAGKMLARFDPQDILVVAQRQYAFRPVAKFAEVTGAVSITGRFNPGTLTNPSLKFYKEVKVIVVTDPLADVQAMKEAIKIGIPIIALCDANNKTDFVDLVIPTNNKGRRSLAVIYWLLAREILKNRGTITSYDQFKYTIDDFEAQI.

It belongs to the universal ribosomal protein uS2 family.

This chain is Small ribosomal subunit protein uS2 (rps2), found in Thermoplasma volcanium (strain ATCC 51530 / DSM 4299 / JCM 9571 / NBRC 15438 / GSS1).